Here is a 779-residue protein sequence, read N- to C-terminus: Nucleus-vacuole junction protein 2 (779 aa).

Residues 1 to 2 are Cytoplasmic-facing; it reads MF. Residues 3-23 form a helical; Signal-anchor for type II membrane protein membrane-spanning segment; sequence FAFLITYLLGGVTFLPFILFI. The Lumenal portion of the chain corresponds to 24–779; sequence YLLTRPTHKS…VRPVPPIPKL (756 aa). Residue asparagine 233 is glycosylated (N-linked (GlcNAc...) asparagine). Positions 238–429 constitute an SMP-LTD domain; that stretch reads SSPDTDWLNA…MPNMNDLAFF (192 aa). Residues 454-465 are compositionally biased toward basic and acidic residues; the sequence is PAEKDAKAERKK. Disordered regions lie at residues 454-539 and 573-592; these read PAEK…NKSS and LKTK…QTTL. Residue serine 473 is modified to Phosphoserine. Over residues 484–494 the composition is skewed to polar residues; sequence RSSNSNDTAPS. N-linked (GlcNAc...) asparagine glycans are attached at residues asparagine 489 and asparagine 536. Asparagine 640 and asparagine 660 each carry an N-linked (GlcNAc...) asparagine glycan. The segment at 654 to 779 is disordered; that stretch reads QNAIDFNVTN…VRPVPPIPKL (126 aa). A compositionally biased stretch (polar residues) spans 660–674; that stretch reads NVTNTHSPSRSISSE. The span at 675–691 shows a compositional bias: basic and acidic residues; it reads KSYKAAERGQQDKHNDV. The span at 733–750 shows a compositional bias: polar residues; that stretch reads GQPTLHPQGQLPIQNVEQ.

It localises to the endoplasmic reticulum membrane. It is found in the nucleus membrane. Its function is as follows. During endoplasmic reticulum (ER) stress or when cellular ceramide levels increase, induces contacts between the ER and medial-Golgi complex to facilitate non-vesicular transport of ceramides from the ER to the Golgi complex where they are converted to complex sphingolipids, preventing toxic ceramide accumulation. The chain is Nucleus-vacuole junction protein 2 (nvj2) from Schizosaccharomyces pombe (strain 972 / ATCC 24843) (Fission yeast).